The primary structure comprises 351 residues: Uroporphyrinogen decarboxylase (351 aa).

Residues 25–29 (RQAGR), Asp-74, Tyr-151, Ser-206, and His-325 each bind substrate.

This sequence belongs to the uroporphyrinogen decarboxylase family. Homodimer.

It localises to the cytoplasm. The enzyme catalyses uroporphyrinogen III + 4 H(+) = coproporphyrinogen III + 4 CO2. The protein operates within porphyrin-containing compound metabolism; protoporphyrin-IX biosynthesis; coproporphyrinogen-III from 5-aminolevulinate: step 4/4. Functionally, catalyzes the decarboxylation of four acetate groups of uroporphyrinogen-III to yield coproporphyrinogen-III. This is Uroporphyrinogen decarboxylase from Chlorobium phaeovibrioides (strain DSM 265 / 1930) (Prosthecochloris vibrioformis (strain DSM 265)).